A 276-amino-acid polypeptide reads, in one-letter code: uncharacterized protein (276 aa).

The segment at 1–20 is disordered; sequence MMSDEQHQGGDGQTTTNTNT.

This is an uncharacterized protein from Dictyostelium discoideum (Social amoeba).